We begin with the raw amino-acid sequence, 78 residues long: MSAYCQVTGRKPGFGKQVSHSHRHTSRRWNPNVQRRKFYLPSEGRTITLTVSPKGLKTIDRDGIESVVAKIRARGEKI.

The disordered stretch occupies residues M1–R28.

Belongs to the bacterial ribosomal protein bL28 family.

In Corynebacterium urealyticum (strain ATCC 43042 / DSM 7109), this protein is Large ribosomal subunit protein bL28.